Here is a 550-residue protein sequence, read N- to C-terminus: Solute carrier family 22 member 11 (550 aa).

Over 1–10 the chain is Cytoplasmic; sequence MAFSKLLEQA. The helical transmembrane segment at 11–31 threads the bilayer; that stretch reads GGVGLFQTLQVLTFILPCLMI. The Extracellular portion of the chain corresponds to 32–142; it reads PSQMLLENFS…DLVCSSQGLK (111 aa). N-linked (GlcNAc...) asparagine glycosylation is found at Asn39, Asn56, and Asn99. A helical transmembrane segment spans residues 143 to 163; it reads PLSQSIFMSGILVGSFIWGLL. The Cytoplasmic segment spans residues 164–174; sequence SYRFGRKPMLS. The chain crosses the membrane as a helical span at residues 175–195; that stretch reads WCCLQLAVAGTSTIFAPTFVI. The Extracellular segment spans residues 196–200; it reads YCGLR. A helical membrane pass occupies residues 201–221; it reads FVAAFGMAGIFLSSLTLMVEW. The Cytoplasmic portion of the chain corresponds to 222-231; sequence TTTSRRAVTM. The helical transmembrane segment at 232–252 threads the bilayer; it reads TVVGCAFSAGQAALGGLAFAL. The Extracellular segment spans residues 253–256; it reads RDWR. The chain crosses the membrane as a helical span at residues 257-277; that stretch reads TLQLAASVPFFAISLISWWLP. Topologically, residues 278-346 are cytoplasmic; that stretch reads ESARWLIIKG…FCVPVLRWRS (69 aa). The helical transmembrane segment at 347–367 threads the bilayer; that stretch reads CAMLVVNFSLLISYYGLVFDL. Topologically, residues 368 to 378 are extracellular; the sequence is QSLGRDIFLLQ. A helical membrane pass occupies residues 379-399; the sequence is ALFGAVDFLGRATTALLLSFL. Topologically, residues 400 to 402 are cytoplasmic; that stretch reads GRR. The helical transmembrane segment at 403–423 threads the bilayer; that stretch reads TIQAGSQAMAGLAILANMLVP. The Extracellular segment spans residues 424-430; that stretch reads QDLQTLR. A helical membrane pass occupies residues 431 to 451; the sequence is VVFAVLGKGCFGISLTCLTIY. Topologically, residues 452-463 are cytoplasmic; the sequence is KAELFPTPVRMT. Residues 464–484 form a helical membrane-spanning segment; sequence ADGILHTVGRLGAMMGPLILM. Topologically, residues 485-490 are extracellular; that stretch reads SRQALP. The helical transmembrane segment at 491 to 511 threads the bilayer; that stretch reads LLPPLLYGVISIASSLVVLFF. Over 512–550 the chain is Cytoplasmic; it reads LPETQGLPLPDTIQDLESQKSTAAQGNRQEAVTVESTSL. Residues 531–550 form a disordered region; sequence KSTAAQGNRQEAVTVESTSL.

This sequence belongs to the major facilitator (TC 2.A.1) superfamily. Organic cation transporter (TC 2.A.1.19) family. Post-translationally, N-glycosylated. Contains several complex-type N-glycans. In terms of tissue distribution, expressed in placental trophoblasts, syncytiotrophoblast and cytotrophoblast. Also located in the proximal tubules in kidneys.

It localises to the cell membrane. Its subcellular location is the apical cell membrane. The protein resides in the basal cell membrane. The enzyme catalyses estrone 3-sulfate(out) + glutarate(in) = estrone 3-sulfate(in) + glutarate(out). It catalyses the reaction dehydroepiandrosterone 3-sulfate(out) = dehydroepiandrosterone 3-sulfate(in). The catalysed reaction is prostaglandin F2alpha(out) = prostaglandin F2alpha(in). It carries out the reaction prostaglandin E2(out) = prostaglandin E2(in). In terms of biological role, antiporter that mediates the transport of conjugated steroids and other specific organic anions at the basal membrane of syncytiotrophoblast and at the apical membrane of proximal tubule epithelial cells, in exchange for anionic compounds. May be responsible for placental absorption of fetal-derived steroid sulfates such as estrone sulfate (E1S) and the steroid hormone precursor dehydroepiandrosterone sulfate (DHEA-S), as well as clearing waste products and xenobiotics from the fetus. Maybe also be involved in placental urate homeostasis. Facilitates the renal reabsorption of organic anions such as urate and derived steroid sulfates. Organic anion glutarate acts as conteranion for E1S renal uptake. Possible transport mode may also include DHEA-S/E1S exchange. Also interacts with inorganic anions such as chloride and hydroxyl ions, therefore possible transport modes may include E1S/Cl(-), E1S/OH(-), urate/Cl(-) and urate/OH(-). Also mediates the transport of prostaglandin E2 (PGE2) and prostaglandin F2-alpha (PGF2-alpha) and may be involved in their renal excretion. Also able to uptake anionic drugs, diuretics, bile salts and ochratoxin A. Mediates the unidirectional efflux of glutamate and aspartate. Glutamate efflux down its transmembrane gradient may drive SLC22A11/OAT4-mediated placental uptake of E1S. This chain is Solute carrier family 22 member 11, found in Homo sapiens (Human).